A 168-amino-acid chain; its full sequence is Protein-export protein SecB (168 aa).

It belongs to the SecB family. Homotetramer, a dimer of dimers. One homotetramer interacts with 1 SecA dimer.

It localises to the cytoplasm. Its function is as follows. One of the proteins required for the normal export of preproteins out of the cell cytoplasm. It is a molecular chaperone that binds to a subset of precursor proteins, maintaining them in a translocation-competent state. It also specifically binds to its receptor SecA. The polypeptide is Protein-export protein SecB (Saccharophagus degradans (strain 2-40 / ATCC 43961 / DSM 17024)).